A 205-amino-acid chain; its full sequence is Ribonuclease HII (205 aa).

An RNase H type-2 domain is found at 16 to 205 (VSEVGIDEVG…KSFLNQSDLI (190 aa)). A divalent metal cation-binding residues include aspartate 22, glutamate 23, and aspartate 118.

This sequence belongs to the RNase HII family. The cofactor is Mn(2+). Requires Mg(2+) as cofactor.

The protein localises to the cytoplasm. The catalysed reaction is Endonucleolytic cleavage to 5'-phosphomonoester.. In terms of biological role, endonuclease that specifically degrades the RNA of RNA-DNA hybrids. The sequence is that of Ribonuclease HII from Prochlorococcus marinus (strain MIT 9312).